The following is a 60-amino-acid chain: Large ribosomal subunit protein uL30 (60 aa).

Belongs to the universal ribosomal protein uL30 family. In terms of assembly, part of the 50S ribosomal subunit.

This is Large ribosomal subunit protein uL30 from Cutibacterium acnes (strain DSM 16379 / KPA171202) (Propionibacterium acnes).